A 552-amino-acid polypeptide reads, in one-letter code: Probable protein kinase UbiB (552 aa).

One can recognise a Protein kinase domain in the interval 121 to 504 (HFDTVPLASA…QGLQRRVVNA (384 aa)). Residues 127-135 (LASASISQV) and K149 contribute to the ATP site. Residue D284 is the Proton acceptor of the active site. 2 helical membrane-spanning segments follow: residues 501–521 (VVNA…YGLH) and 530–550 (IPVW…SAWW).

It belongs to the ABC1 family. UbiB subfamily.

It localises to the cell inner membrane. The protein operates within cofactor biosynthesis; ubiquinone biosynthesis [regulation]. Its function is as follows. Is probably a protein kinase regulator of UbiI activity which is involved in aerobic coenzyme Q (ubiquinone) biosynthesis. The sequence is that of Probable protein kinase UbiB from Xylella fastidiosa (strain M12).